The chain runs to 107 residues: Toluene 1,2-dioxygenase system ferredoxin subunit (107 aa).

Positions 4–99 (TYILRQGDLP…IKVEGDEVHV (96 aa)) constitute a Rieske domain. Cysteine 43, histidine 45, cysteine 62, and histidine 65 together coordinate [2Fe-2S] cluster.

Belongs to the bacterial ring-hydroxylating dioxygenase ferredoxin component family. As to quaternary structure, this dioxygenase system consists of four proteins: the two subunits of the hydroxylase component (todC1 and todC2), a ferredoxin (TodB) and a ferredoxin reductase (TodA).

It participates in xenobiotic degradation; toluene degradation. Functionally, this protein seems to be a 2Fe-2S ferredoxin. In Pseudomonas putida (strain ATCC 700007 / DSM 6899 / JCM 31910 / BCRC 17059 / LMG 24140 / F1), this protein is Toluene 1,2-dioxygenase system ferredoxin subunit (todB).